We begin with the raw amino-acid sequence, 296 residues long: MPTTALSDQARAKVNLTLRVVGRRVDGYHDLESVVAFADCADRLTLHPGAELSLVTSGPGAQDCGDTADNLVLKATRLLAERVPKLRSGAFVLDKHLPVAAGIGGGSADAAAALRLLARANDLAADDPRVVEAARLTGADVPVCLPSRPCVMTGVGDTLTPLPLPRLPAVMVNPRVPVATKDVFKALGLRAGQLNVGIVDVLKSKGWPAVDASVADWIVAVRRGTNDLEAPALKVEPIVGDVLRALAALPGVRMSRMSGSGATCFALFASDEDTKAGAEVLRAAHPGWWIHAGSLS.

Lys-13 is a catalytic residue. 98–108 (PVAAGIGGGSA) is an ATP binding site. Asp-140 is a catalytic residue.

Belongs to the GHMP kinase family. IspE subfamily.

The catalysed reaction is 4-CDP-2-C-methyl-D-erythritol + ATP = 4-CDP-2-C-methyl-D-erythritol 2-phosphate + ADP + H(+). The protein operates within isoprenoid biosynthesis; isopentenyl diphosphate biosynthesis via DXP pathway; isopentenyl diphosphate from 1-deoxy-D-xylulose 5-phosphate: step 3/6. Functionally, catalyzes the phosphorylation of the position 2 hydroxy group of 4-diphosphocytidyl-2C-methyl-D-erythritol. The polypeptide is 4-diphosphocytidyl-2-C-methyl-D-erythritol kinase (Rhodopseudomonas palustris (strain HaA2)).